The chain runs to 190 residues: Imidazoleglycerol-phosphate dehydratase (190 aa).

Belongs to the imidazoleglycerol-phosphate dehydratase family.

The protein localises to the cytoplasm. The catalysed reaction is D-erythro-1-(imidazol-4-yl)glycerol 3-phosphate = 3-(imidazol-4-yl)-2-oxopropyl phosphate + H2O. Its pathway is amino-acid biosynthesis; L-histidine biosynthesis; L-histidine from 5-phospho-alpha-D-ribose 1-diphosphate: step 6/9. The sequence is that of Imidazoleglycerol-phosphate dehydratase from Campylobacter fetus subsp. fetus (strain 82-40).